The following is a 298-amino-acid chain: Zinc-alpha-2-glycoprotein (298 aa).

The first 20 residues, 1 to 20, serve as a signal peptide directing secretion; that stretch reads MVRMVPVLLSLLLLLGPAVP. Glutamine 21 bears the Pyrrolidone carboxylic acid mark. The N-linked (GlcNAc...) (complex) asparagine glycan is linked to asparagine 109. Asparagine 112 carries an N-linked (GlcNAc...) asparagine glycan. Intrachain disulfides connect cysteine 123-cysteine 186 and cysteine 225-cysteine 280. An N-linked (GlcNAc...) (complex) asparagine glycan is attached at asparagine 128. The 86-residue stretch at 207–292 folds into the Ig-like C1-type domain; the sequence is PSVVVTSHQA…QHSSLAQPLV (86 aa). N-linked (GlcNAc...) asparagine glycosylation occurs at asparagine 259.

This sequence belongs to the MHC class I family. In terms of assembly, interacts with PIP. N-glycosylated. N-glycan at Asn-128: Hex5HexNAc4. In terms of tissue distribution, blood plasma, seminal plasma, urine, saliva, sweat, epithelial cells of various human glands, liver.

Its subcellular location is the secreted. Functionally, stimulates lipid degradation in adipocytes and causes the extensive fat losses associated with some advanced cancers. May bind polyunsaturated fatty acids. This Homo sapiens (Human) protein is Zinc-alpha-2-glycoprotein (AZGP1).